The chain runs to 85 residues: Putative N.vectensis toxin 1 9 (85 aa).

A signal peptide spans 1 to 20; that stretch reads MASFKIVIVCLALLVAVASA. Residues 21–36 constitute a propeptide that is removed on maturation; sequence RRRDMMSDDELDYHFS. Intrachain disulfides connect Cys42–Cys82, Cys44–Cys72, and Cys65–Cys83.

This sequence belongs to the sea anemone sodium channel inhibitory toxin family. Type II subfamily. Expressed in ectodermal glands and in clumps outside of the extodermal layer. Is not expressed in nematocytes. In adult female tissues, shows similar expression levels in mesenteries (gametes-producing tissue), tentacles, pharynx and physa.

Its subcellular location is the secreted. In terms of biological role, binds to site 3 of voltage-gated sodium channels and inhibits the inactivation process. Is highly active on DmNav1/TipE (drosophila) and is only extremely weakly active on rat Nav1.4-beta-1/SCN4A-SCN1B, and on human Nav1.5-beta-1/SCN5A-beta-1. This reveals high specificity for arthropod over mammalian channels. In vivo, when released into the medium, this recombinant toxin induces impaired swimming, paralysis and death of the crustacean A.nauplii within several hours. Also causes paralysis of cherry shrimps immediately after injection at very low doses. Its effect on zebrafish (D.rerio) larvae is also rapid, since it induces tail twitching accompanied by impaired swimming after 20 minutes and complete paralysis within 45 minutes. It has also been observed to cause death of zebrafish larvae within 1 hour. This chain is Putative N.vectensis toxin 1 9, found in Nematostella vectensis (Starlet sea anemone).